A 217-amino-acid polypeptide reads, in one-letter code: Urease accessory protein UreG (217 aa).

Position 13-20 (13-20) interacts with GTP; the sequence is GPVGSGKT.

This sequence belongs to the SIMIBI class G3E GTPase family. UreG subfamily. As to quaternary structure, homodimer. UreD, UreF and UreG form a complex that acts as a GTP-hydrolysis-dependent molecular chaperone, activating the urease apoprotein by helping to assemble the nickel containing metallocenter of UreC. The UreE protein probably delivers the nickel.

The protein localises to the cytoplasm. Its function is as follows. Facilitates the functional incorporation of the urease nickel metallocenter. This process requires GTP hydrolysis, probably effectuated by UreG. The sequence is that of Urease accessory protein UreG from Frankia alni (strain DSM 45986 / CECT 9034 / ACN14a).